We begin with the raw amino-acid sequence, 127 residues long: MORF4 family-associated protein 1 (127 aa).

The stretch at 92-126 (RAAKRCEKAEEKAKEIAKMAEMLVELVRRIEKSES) forms a coiled coil.

The protein belongs to the MORF4 family-associated protein family. As to quaternary structure, found in a complex composed of MORF4L1, MRFAP1 and RB1. Interacts via its N-terminus with MORF4L1. Interacts with CSTB and MORF4L2.

The protein localises to the nucleus. The protein resides in the cytoplasm. It is found in the perinuclear region. This is MORF4 family-associated protein 1 from Homo sapiens (Human).